We begin with the raw amino-acid sequence, 179 residues long: MARIKDKYRNEVAPAMMEKFGYKSVMQIPRLEKIIINMGLGQAKENQKELEIAVKELGIIAGQKPITTKAKKSVANFKVREGMAVGAKTTLRGEKMYEFADRLINIALPRVRDFRGVNPNSFDGRGNYALGVKEQLIFPEIEYDKVDKVRGMDIILVTTANSDEESRELLRLLGMPFTK.

Belongs to the universal ribosomal protein uL5 family. Part of the 50S ribosomal subunit; part of the 5S rRNA/L5/L18/L25 subcomplex. Contacts the 5S rRNA and the P site tRNA. Forms a bridge to the 30S subunit in the 70S ribosome.

This is one of the proteins that bind and probably mediate the attachment of the 5S RNA into the large ribosomal subunit, where it forms part of the central protuberance. In the 70S ribosome it contacts protein S13 of the 30S subunit (bridge B1b), connecting the 2 subunits; this bridge is implicated in subunit movement. Contacts the P site tRNA; the 5S rRNA and some of its associated proteins might help stabilize positioning of ribosome-bound tRNAs. This Alkaliphilus metalliredigens (strain QYMF) protein is Large ribosomal subunit protein uL5.